Here is a 92-residue protein sequence, read N- to C-terminus: Small ribosomal subunit protein uS19 (92 aa).

Belongs to the universal ribosomal protein uS19 family.

In terms of biological role, protein S19 forms a complex with S13 that binds strongly to the 16S ribosomal RNA. The sequence is that of Small ribosomal subunit protein uS19 from Rhodopseudomonas palustris (strain BisB5).